The chain runs to 447 residues: Glycogen synthase (447 aa).

Arg15 contributes to the ADP-alpha-D-glucose binding site.

It belongs to the glycosyltransferase 1 family. Bacterial/plant glycogen synthase subfamily.

The catalysed reaction is [(1-&gt;4)-alpha-D-glucosyl](n) + ADP-alpha-D-glucose = [(1-&gt;4)-alpha-D-glucosyl](n+1) + ADP + H(+). It functions in the pathway glycan biosynthesis; glycogen biosynthesis. In terms of biological role, synthesizes alpha-1,4-glucan chains using ADP-glucose. The chain is Glycogen synthase from Deinococcus geothermalis (strain DSM 11300 / CIP 105573 / AG-3a).